We begin with the raw amino-acid sequence, 30 residues long: Cysteine-rich venom protein hematin (30 aa).

This sequence belongs to the CRISP family. Contains 8 disulfide bonds. Expressed by the venom gland.

Its subcellular location is the secreted. In terms of biological role, inhibits calcium-activated potassium channels (KCa), voltage-gated potassium channel (Kv), and the calcium release channel/ryanodine receptor (RyR). The protein is Cysteine-rich venom protein hematin of Hemachatus haemachatus (Rinkhals).